A 72-amino-acid polypeptide reads, in one-letter code: Large ribosomal subunit protein uL29 (72 aa).

Belongs to the universal ribosomal protein uL29 family.

This chain is Large ribosomal subunit protein uL29, found in Prochlorococcus marinus (strain MIT 9301).